Reading from the N-terminus, the 143-residue chain is Boletus edulis lectin (143 aa).

Beta-D-Gal-(1-&gt;3)-alpha-D-GalNAc is bound by residues Ala30, 49–50 (SG), and 72–73 (HN). N-acetyl-alpha-D-galactosamine contacts are provided by residues 49–50 (SG) and 72–73 (HN). N,N'-diacetylchitobiose contacts are provided by residues 79-82 (DVVT), Arg103, and Tyr114. N-acetyl-alpha-D-glucosamine contacts are provided by residues 79–82 (DVVT), Arg103, and Tyr114.

It belongs to the fungal fruit body lectin family. In terms of assembly, homotetramer.

Lectin that recognizes O-linked galactose-beta-1,3-N-acetylgalactosamine, a disaccharide (Thomsen-Friedenreich antigen or T-disaccharide), present on cell surface glycoproteins. Can also bind chitin, N,N'-diacetylchitobiose, N-acetylgalactosamine and N-acetylglucosamine. Inhibits proliferation of colon, breast and liver cancer cell lines (in vitro). The sequence is that of Boletus edulis lectin from Boletus edulis (King bolete).